Reading from the N-terminus, the 296-residue chain is 4-hydroxy-tetrahydrodipicolinate synthase (296 aa).

Threonine 50 serves as a coordination point for pyruvate. Tyrosine 138 acts as the Proton donor/acceptor in catalysis. The Schiff-base intermediate with substrate role is filled by lysine 166. Isoleucine 208 contacts pyruvate.

Belongs to the DapA family. Homotetramer; dimer of dimers.

The protein resides in the cytoplasm. The enzyme catalyses L-aspartate 4-semialdehyde + pyruvate = (2S,4S)-4-hydroxy-2,3,4,5-tetrahydrodipicolinate + H2O + H(+). It participates in amino-acid biosynthesis; L-lysine biosynthesis via DAP pathway; (S)-tetrahydrodipicolinate from L-aspartate: step 3/4. Its function is as follows. Catalyzes the condensation of (S)-aspartate-beta-semialdehyde [(S)-ASA] and pyruvate to 4-hydroxy-tetrahydrodipicolinate (HTPA). The polypeptide is 4-hydroxy-tetrahydrodipicolinate synthase (Ruthia magnifica subsp. Calyptogena magnifica).